A 214-amino-acid polypeptide reads, in one-letter code: Large ribosomal subunit protein bL25 (214 aa).

Residues 179–214 (VPPTQGPSEAEIEEVEAGDADTPEPEVVGEKEEDEE) are disordered. Acidic residues predominate over residues 188 to 202 (AEIEEVEAGDADTPE).

Belongs to the bacterial ribosomal protein bL25 family. CTC subfamily. In terms of assembly, part of the 50S ribosomal subunit; part of the 5S rRNA/L5/L18/L25 subcomplex. Contacts the 5S rRNA. Binds to the 5S rRNA independently of L5 and L18.

Its function is as follows. This is one of the proteins that binds to the 5S RNA in the ribosome where it forms part of the central protuberance. This is Large ribosomal subunit protein bL25 from Staphylococcus carnosus (strain TM300).